We begin with the raw amino-acid sequence, 136 residues long: uncharacterized protein (136 aa).

This sequence belongs to the mimivirus L163/R849 family.

This is an uncharacterized protein from Acanthamoeba polyphaga mimivirus (APMV).